A 451-amino-acid chain; its full sequence is Interferon regulatory factor 4 (451 aa).

A DNA-binding region (IRF tryptophan pentad repeat) is located at residues 21–129 (NGKLRQWLID…DPYKVYRIVP (109 aa)). Serine 447 and serine 448 each carry phosphoserine; by ROCK2.

The protein belongs to the IRF family. As to quaternary structure, interacts with the BATF-JUNB heterodimer. Interacts with BATF (via bZIP domain); the interaction is direct. Interacts with SPIB. Interacts with DEF6. Directly interacts with NLRP3 in the nucleus of Th2 cells; this interaction enhances IRF4 ability to bind to the IL4 promoter and is required for optimal IRF4-dependent IL4 transcription. Interacts with SPI1. Post-translationally, phosphorylation by ROCK2 regulates IL-17 and IL-21 production. Lymphoid cells.

Its subcellular location is the nucleus. The protein resides in the cytoplasm. Functionally, transcriptional activator. Binds to the interferon-stimulated response element (ISRE) of the MHC class I promoter. Binds the immunoglobulin lambda light chain enhancer, together with PU.1. Probably plays a role in ISRE-targeted signal transduction mechanisms specific to lymphoid cells. Involved in CD8(+) dendritic cell differentiation by forming a complex with the BATF-JUNB heterodimer in immune cells, leading to recognition of AICE sequence (5'-TGAnTCA/GAAA-3'), an immune-specific regulatory element, followed by cooperative binding of BATF and IRF4 and activation of genes. The sequence is that of Interferon regulatory factor 4 from Homo sapiens (Human).